Here is a 390-residue protein sequence, read N- to C-terminus: MKIHEYQAKEILRRHKANVPFGIVIDKKENASKAHDEVTSKTGGSVVVVKAQIHAGGRGKGGGVKVTKTKEDATAAVDKILGMQLITPQTGPEGKKVLKVYLEQGIDIAKEYYLSILLDRSIRKTILMASTEGGMEIEEVAETHPEKILKIAVDPGIGLQVNQARQLAFELGLPAESHKSFQSLVMAIYDAYIKEDASLLEINPLILTKQNEIIAGDCKIDLDENALYRHADNAAFRDITEEDPLEVQASEFNLNYVKLDGNIGCMVNGAGLAMATMDIVKLAGAEPANFLDVGGGANKTTVTNGFKIILGDPNVKGIFVNIFGGIVRCDMVAEGIIEAAKAVDLKVPLVVRLQGTNSELGREVLNKSGLKITGVDDLREAASTIAKLIK.

One can recognise an ATP-grasp domain in the interval 9–248 (KEILRRHKAN…ITEEDPLEVQ (240 aa)). ATP contacts are provided by residues K50, 57–59 (GRG), E103, I106, and E111. Residues N203 and D217 each coordinate Mg(2+). Substrate contacts are provided by residues N268 and 325-327 (GIV).

The protein belongs to the succinate/malate CoA ligase beta subunit family. In terms of assembly, heterotetramer of two alpha and two beta subunits. The cofactor is Mg(2+).

The enzyme catalyses succinate + ATP + CoA = succinyl-CoA + ADP + phosphate. The catalysed reaction is GTP + succinate + CoA = succinyl-CoA + GDP + phosphate. It functions in the pathway carbohydrate metabolism; tricarboxylic acid cycle; succinate from succinyl-CoA (ligase route): step 1/1. Functionally, succinyl-CoA synthetase functions in the citric acid cycle (TCA), coupling the hydrolysis of succinyl-CoA to the synthesis of either ATP or GTP and thus represents the only step of substrate-level phosphorylation in the TCA. The beta subunit provides nucleotide specificity of the enzyme and binds the substrate succinate, while the binding sites for coenzyme A and phosphate are found in the alpha subunit. This chain is Succinate--CoA ligase [ADP-forming] subunit beta, found in Leptospira borgpetersenii serovar Hardjo-bovis (strain JB197).